The sequence spans 796 residues: Protein translocase subunit SecA 2 (796 aa).

Residues Q84, 102–106 (GEGKT), and D496 each bind ATP.

It belongs to the SecA family. Monomer and homodimer. Part of the essential Sec protein translocation apparatus which comprises SecA, SecYEG and auxiliary proteins SecDF. Other proteins may also be involved.

The protein resides in the cell membrane. It is found in the cytoplasm. The catalysed reaction is ATP + H2O + cellular proteinSide 1 = ADP + phosphate + cellular proteinSide 2.. Functionally, part of the Sec protein translocase complex. Interacts with the SecYEG preprotein conducting channel. Has a central role in coupling the hydrolysis of ATP to the transfer of proteins into and across the cell membrane, serving as an ATP-driven molecular motor driving the stepwise translocation of polypeptide chains across the membrane. This Staphylococcus aureus (strain MSSA476) protein is Protein translocase subunit SecA 2.